Reading from the N-terminus, the 319-residue chain is Acetyl-coenzyme A carboxylase carboxyl transferase subunit alpha (319 aa).

In terms of domain architecture, CoA carboxyltransferase C-terminal spans 34-295; the sequence is ELEEEVSKLK…KVRLKRDLAD (262 aa).

This sequence belongs to the AccA family. In terms of assembly, acetyl-CoA carboxylase is a heterohexamer composed of biotin carboxyl carrier protein (AccB), biotin carboxylase (AccC) and two subunits each of ACCase subunit alpha (AccA) and ACCase subunit beta (AccD).

It is found in the cytoplasm. It catalyses the reaction N(6)-carboxybiotinyl-L-lysyl-[protein] + acetyl-CoA = N(6)-biotinyl-L-lysyl-[protein] + malonyl-CoA. It participates in lipid metabolism; malonyl-CoA biosynthesis; malonyl-CoA from acetyl-CoA: step 1/1. In terms of biological role, component of the acetyl coenzyme A carboxylase (ACC) complex. First, biotin carboxylase catalyzes the carboxylation of biotin on its carrier protein (BCCP) and then the CO(2) group is transferred by the carboxyltransferase to acetyl-CoA to form malonyl-CoA. The sequence is that of Acetyl-coenzyme A carboxylase carboxyl transferase subunit alpha from Pseudoalteromonas translucida (strain TAC 125).